A 294-amino-acid chain; its full sequence is Ribosomal RNA small subunit methyltransferase H (294 aa).

S-adenosyl-L-methionine is bound by residues 36-38, Asp55, Phe82, Asp97, and Gln104; that span reads GGH. Residues 265-285 are disordered; that stretch reads KPTVATDDEQNRNPRSRSAKW.

Belongs to the methyltransferase superfamily. RsmH family.

The protein localises to the cytoplasm. The catalysed reaction is cytidine(1402) in 16S rRNA + S-adenosyl-L-methionine = N(4)-methylcytidine(1402) in 16S rRNA + S-adenosyl-L-homocysteine + H(+). Its function is as follows. Specifically methylates the N4 position of cytidine in position 1402 (C1402) of 16S rRNA. This chain is Ribosomal RNA small subunit methyltransferase H, found in Synechococcus sp. (strain CC9902).